An 81-amino-acid chain; its full sequence is ATP synthase subunit c, chloroplastic (81 aa).

Transmembrane regions (helical) follow at residues 3–23 and 57–77; these read AIVS…AAIG and LAFM…LLFA.

Belongs to the ATPase C chain family. As to quaternary structure, F-type ATPases have 2 components, F(1) - the catalytic core - and F(0) - the membrane proton channel. F(1) has five subunits: alpha(3), beta(3), gamma(1), delta(1), epsilon(1). F(0) has four main subunits: a(1), b(1), b'(1) and c(10-14). The alpha and beta chains form an alternating ring which encloses part of the gamma chain. F(1) is attached to F(0) by a central stalk formed by the gamma and epsilon chains, while a peripheral stalk is formed by the delta, b and b' chains.

The protein resides in the plastid. Its subcellular location is the chloroplast thylakoid membrane. In terms of biological role, f(1)F(0) ATP synthase produces ATP from ADP in the presence of a proton or sodium gradient. F-type ATPases consist of two structural domains, F(1) containing the extramembraneous catalytic core and F(0) containing the membrane proton channel, linked together by a central stalk and a peripheral stalk. During catalysis, ATP synthesis in the catalytic domain of F(1) is coupled via a rotary mechanism of the central stalk subunits to proton translocation. Its function is as follows. Key component of the F(0) channel; it plays a direct role in translocation across the membrane. A homomeric c-ring of between 10-14 subunits forms the central stalk rotor element with the F(1) delta and epsilon subunits. The chain is ATP synthase subunit c, chloroplastic from Cyanidioschyzon merolae (strain NIES-3377 / 10D) (Unicellular red alga).